Here is a 202-residue protein sequence, read N- to C-terminus: Putative 3-methyladenine DNA glycosylase (202 aa).

This sequence belongs to the DNA glycosylase MPG family.

The polypeptide is Putative 3-methyladenine DNA glycosylase (Staphylococcus aureus (strain bovine RF122 / ET3-1)).